The sequence spans 754 residues: uncharacterized protein (754 aa).

Active-site charge relay system residues include S585 and H707. Residues 733-754 (SHAPPPSRKARSAARRSTDPVR) are disordered.

Belongs to the peptidase S9A family.

This is an uncharacterized protein from Sinorhizobium fredii (strain NBRC 101917 / NGR234).